A 235-amino-acid chain; its full sequence is Casparian strip membrane protein 2 (235 aa).

At methionine 1–cysteine 70 the chain is on the cytoplasmic side. The chain crosses the membrane as a helical span at residues leucine 71–isoleucine 91. Residues serine 92–alanine 118 lie on the Extracellular side of the membrane. A helical membrane pass occupies residues phenylalanine 119–phenylalanine 139. The Cytoplasmic segment spans residues serine 140–aspartate 162. A helical membrane pass occupies residues valine 163 to alanine 183. Residues histidine 184–valine 210 are Extracellular-facing. The chain crosses the membrane as a helical span at residues valine 211 to isoleucine 231. Over arginine 232 to lysine 235 the chain is Cytoplasmic.

The protein belongs to the Casparian strip membrane proteins (CASP) family. As to quaternary structure, homodimer and heterodimers.

It is found in the cell membrane. Its function is as follows. Regulates membrane-cell wall junctions and localized cell wall deposition. Required for establishment of the Casparian strip membrane domain (CSD) and the subsequent formation of Casparian strips, a cell wall modification of the root endodermis that determines an apoplastic barrier between the intraorganismal apoplasm and the extraorganismal apoplasm and prevents lateral diffusion. The sequence is that of Casparian strip membrane protein 2 from Sorghum bicolor (Sorghum).